The sequence spans 313 residues: Acetaldehyde dehydrogenase 3 (313 aa).

11–14 (SGNI) serves as a coordination point for NAD(+). C129 acts as the Acyl-thioester intermediate in catalysis. Residues 160 to 168 (SAGPGTRAN) and N288 each bind NAD(+).

This sequence belongs to the acetaldehyde dehydrogenase family.

It catalyses the reaction acetaldehyde + NAD(+) + CoA = acetyl-CoA + NADH + H(+). This Rhizorhabdus wittichii (strain DSM 6014 / CCUG 31198 / JCM 15750 / NBRC 105917 / EY 4224 / RW1) (Sphingomonas wittichii) protein is Acetaldehyde dehydrogenase 3.